We begin with the raw amino-acid sequence, 32 residues long: Photosystem II reaction center protein T (32 aa).

The helical transmembrane segment at 3-23 (AITYTFILFLTLGLLFFAVAF) threads the bilayer.

It belongs to the PsbT family. As to quaternary structure, PSII is composed of 1 copy each of membrane proteins PsbA, PsbB, PsbC, PsbD, PsbE, PsbF, PsbH, PsbI, PsbJ, PsbK, PsbL, PsbM, PsbT, PsbX, PsbY, PsbZ, Psb30/Ycf12, peripheral proteins PsbO, CyanoQ (PsbQ), PsbU, PsbV and a large number of cofactors. It forms dimeric complexes.

It is found in the cellular thylakoid membrane. Its function is as follows. Found at the monomer-monomer interface of the photosystem II (PS II) dimer, plays a role in assembly and dimerization of PSII. PSII is a light-driven water plastoquinone oxidoreductase, using light energy to abstract electrons from H(2)O, generating a proton gradient subsequently used for ATP formation. This is Photosystem II reaction center protein T from Synechococcus sp. (strain JA-2-3B'a(2-13)) (Cyanobacteria bacterium Yellowstone B-Prime).